A 596-amino-acid chain; its full sequence is uncharacterized protein (596 aa).

The signal sequence occupies residues 1–20; sequence MRYKPLLLALMLVFSTPAVA. Composition is skewed to basic and acidic residues over residues 25–90 and 161–184; these read AHNR…KEAT and VRSD…NAKT. Positions 25–184 are disordered; the sequence is AHNRSAEVKK…KYREEKNAKT (160 aa). 2 coiled-coil regions span residues 177–281 and 318–454; these read REEK…RFVS and NREV…TAED.

The protein belongs to the peptidase M23B family.

This is an uncharacterized protein from Neisseria meningitidis serogroup B (strain ATCC BAA-335 / MC58).